Consider the following 159-residue polypeptide: Transmembrane protein 89 (159 aa).

A signal peptide spans 1–24 (MLHVLASLPLLLLLVTSASTHAWS). At 25-63 (RPLWYQVGLDLQPWGCQPKSVEGCRGGLSCPGYWLGPGA) the chain is on the extracellular side. The chain crosses the membrane as a helical span at residues 64–86 (SRIYPVAAVMITTTMLMICRKIL). The Cytoplasmic portion of the chain corresponds to 87–159 (QGRRRSQATK…QIKGTSTQSG (73 aa)). The interval 91-110 (RSQATKGEHPQVTTEPCGPW) is disordered.

Its subcellular location is the membrane. The chain is Transmembrane protein 89 (TMEM89) from Homo sapiens (Human).